The primary structure comprises 748 residues: Putative transmembrane protein ORF88 (748 aa).

The first 20 residues, M1 to A20, serve as a signal peptide directing secretion. Topologically, residues N21–S723 are extracellular. 8 N-linked (GlcNAc...) asparagine; by host glycosylation sites follow: N55, N78, N99, N152, N189, N390, N467, and N499. The disordered stretch occupies residues L531–T574. Over residues S535–I570 the composition is skewed to pro residues. Residues N573, N584, N599, N612, and N617 are each glycosylated (N-linked (GlcNAc...) asparagine; by host). A disordered region spans residues P650–E680. Positions P656–S669 are enriched in pro residues. Residues Y724–I744 traverse the membrane as a helical segment. The Cytoplasmic portion of the chain corresponds to K745–I748.

The protein resides in the host membrane. This is Putative transmembrane protein ORF88 from Magallana gigas (Pacific oyster).